The primary structure comprises 454 residues: Asparagine--tRNA ligase (454 aa).

It belongs to the class-II aminoacyl-tRNA synthetase family. As to quaternary structure, homodimer.

Its subcellular location is the cytoplasm. It carries out the reaction tRNA(Asn) + L-asparagine + ATP = L-asparaginyl-tRNA(Asn) + AMP + diphosphate + H(+). The chain is Asparagine--tRNA ligase from Ureaplasma parvum serovar 3 (strain ATCC 27815 / 27 / NCTC 11736).